Reading from the N-terminus, the 967-residue chain is Leucine--tRNA ligase (967 aa).

A 'HIGH' region motif is present at residues 43-53 (PYLSGHLHVGH). Residues 650–654 (KMSKS) carry the 'KMSKS' region motif. K653 contributes to the ATP binding site.

Belongs to the class-I aminoacyl-tRNA synthetase family.

Its subcellular location is the cytoplasm. It carries out the reaction tRNA(Leu) + L-leucine + ATP = L-leucyl-tRNA(Leu) + AMP + diphosphate. The polypeptide is Leucine--tRNA ligase (Thermococcus kodakarensis (strain ATCC BAA-918 / JCM 12380 / KOD1) (Pyrococcus kodakaraensis (strain KOD1))).